Here is a 282-residue protein sequence, read N- to C-terminus: uncharacterized protein (282 aa).

The HTH rpiR-type domain occupies 2–78 (TDVLAVIREM…IKIAVSLAKQ (77 aa)). The H-T-H motif DNA-binding region spans 38–57 (VNELANACDTSEASIIRFCR). The 141-residue stretch at 122–262 (AAEALANANK…FILVAQKKYN (141 aa)) folds into the SIS domain.

This is an uncharacterized protein from Caldanaerobacter subterraneus subsp. tengcongensis (strain DSM 15242 / JCM 11007 / NBRC 100824 / MB4) (Thermoanaerobacter tengcongensis).